We begin with the raw amino-acid sequence, 118 residues long: Vesicle-associated membrane protein 1 (118 aa).

The span at 1 to 15 (MSAPAQPPTEGAEGA) shows a compositional bias: low complexity. Residues 1 to 36 (MSAPAQPPTEGAEGAAPGGGPPGPPPNMTSNRRLQQ) are disordered. Residues 1 to 96 (MSAPAQPPTE…KRKYWWKNCK (96 aa)) lie on the Cytoplasmic side of the membrane. One can recognise a v-SNARE coiled-coil homology domain in the interval 33–93 (RLQQTQAQVE…AKLKRKYWWK (61 aa)). The residue at position 63 (Ser63) is a Phosphoserine. The helical; Anchor for type IV membrane protein transmembrane segment at 97–116 (MMIMLGAICAIIVVVIVIYF) threads the bilayer. Topologically, residues 117–118 (FA) are vesicular.

It belongs to the synaptobrevin family. Interacts with VAPA and VAPB.

The protein localises to the cytoplasmic vesicle. It is found in the secretory vesicle. Its subcellular location is the synaptic vesicle membrane. The protein resides in the synapse. It localises to the synaptosome. The protein localises to the cytoplasmic vesicle membrane. Its function is as follows. Involved in the targeting and/or fusion of transport vesicles to their target membrane. This chain is Vesicle-associated membrane protein 1 (VAMP1), found in Bos taurus (Bovine).